The chain runs to 850 residues: Receptor-like protein kinase ANXUR1 (850 aa).

A signal peptide spans 1–26; sequence MSGKTRILFFLTCLSFLLVFPTRSNG. The Extracellular segment spans residues 27–429; the sequence is QDLALSCGTS…KKEFKNEKRH (403 aa). Residues Asn-114, Asn-132, Asn-292, Asn-302, and Asn-330 are each glycosylated (N-linked (GlcNAc...) asparagine). A helical membrane pass occupies residues 430 to 450; it reads AFIIGSAGGVLAVLIGALCFT. At 451–850 the chain is on the cytoplasmic side; sequence AYKKKQGYQG…FSQIVNPKGR (400 aa). Residues 517–790 enclose the Protein kinase domain; the sequence is FDDSNVIGVG…GDVLWNLEFA (274 aa). Residues 523–531 and Lys-545 contribute to the ATP site; that span reads IGVGGFGKV. The active-site Proton acceptor is the Asp-641. Positions 796-850 are disordered; it reads TADGTRHRTPNNGGSSEDLGRGGMAVNVAGRDDVSDLSSEDNTEIFSQIVNPKGR. Over residues 839–850 the composition is skewed to polar residues; sequence EIFSQIVNPKGR.

The protein belongs to the protein kinase superfamily. Ser/Thr protein kinase family. In terms of tissue distribution, expressed in pollen, but not in pistils or seedlings.

Its subcellular location is the cell membrane. It catalyses the reaction L-seryl-[protein] + ATP = O-phospho-L-seryl-[protein] + ADP + H(+). The enzyme catalyses L-threonyl-[protein] + ATP = O-phospho-L-threonyl-[protein] + ADP + H(+). In terms of biological role, receptor-like protein kinase that controls pollen tube behavior by directing rupture at proper timing to release the sperm cell. This Arabidopsis thaliana (Mouse-ear cress) protein is Receptor-like protein kinase ANXUR1 (ANX1).